Reading from the N-terminus, the 540-residue chain is Probable H/ACA ribonucleoprotein complex subunit 4 (540 aa).

The segment at 1–24 is disordered; sequence MTTDKKSKSKSSEKSTQEVEQVIK. The active-site Nucleophile is Asp109. Positions 280–355 constitute a PUA domain; the sequence is YKRIVVKDSA…VVATIKRVIM (76 aa). Positions 414-540 are disordered; it reads SPVESMNVDT…DKKEKKKSKN (127 aa). The stretch at 448-494 forms a coiled coil; the sequence is KKEKKDKKEKKKDSSDDESEEEKSSKKDKKEKKEKKEKKEKKSSKDD. Over residues 473-489 the composition is skewed to basic residues; that stretch reads KKDKKEKKEKKEKKEKK. Composition is skewed to basic and acidic residues over residues 490–503 and 513–528; these read SSKD…SKKE and SDKD…DKKD. A compositionally biased stretch (basic residues) spans 529–540; that stretch reads KKDKKEKKKSKN.

This sequence belongs to the pseudouridine synthase TruB family. As to quaternary structure, component of the small nucleolar ribonucleoprotein particles containing H/ACA-type snoRNAs (H/ACA snoRNPs).

Its subcellular location is the nucleus. The protein resides in the nucleolus. It carries out the reaction a uridine in RNA = a pseudouridine in RNA. Plays a central role in ribosomal RNA processing. Probable catalytic subunit of H/ACA small nucleolar ribonucleoprotein (H/ACA snoRNP) complex, which catalyzes pseudouridylation of rRNA. This involves the isomerization of uridine such that the ribose is subsequently attached to C5, instead of the normal N1. Pseudouridine ('psi') residues may serve to stabilize the conformation of rRNAs. The protein is Probable H/ACA ribonucleoprotein complex subunit 4 (nola4) of Dictyostelium discoideum (Social amoeba).